The chain runs to 150 residues: D-aminoacyl-tRNA deacylase (150 aa).

The short motif at 138–139 (GP) is the Gly-cisPro motif, important for rejection of L-amino acids element.

This sequence belongs to the DTD family. In terms of assembly, homodimer.

It is found in the cytoplasm. The enzyme catalyses glycyl-tRNA(Ala) + H2O = tRNA(Ala) + glycine + H(+). It carries out the reaction a D-aminoacyl-tRNA + H2O = a tRNA + a D-alpha-amino acid + H(+). In terms of biological role, an aminoacyl-tRNA editing enzyme that deacylates mischarged D-aminoacyl-tRNAs. Also deacylates mischarged glycyl-tRNA(Ala), protecting cells against glycine mischarging by AlaRS. Acts via tRNA-based rather than protein-based catalysis; rejects L-amino acids rather than detecting D-amino acids in the active site. By recycling D-aminoacyl-tRNA to D-amino acids and free tRNA molecules, this enzyme counteracts the toxicity associated with the formation of D-aminoacyl-tRNA entities in vivo and helps enforce protein L-homochirality. The polypeptide is D-aminoacyl-tRNA deacylase (Dechloromonas aromatica (strain RCB)).